A 101-amino-acid chain; its full sequence is Urease subunit gamma (101 aa).

It belongs to the urease gamma subunit family. Heterotrimer of UreA (gamma), UreB (beta) and UreC (alpha) subunits. Three heterotrimers associate to form the active enzyme.

The protein resides in the cytoplasm. The enzyme catalyses urea + 2 H2O + H(+) = hydrogencarbonate + 2 NH4(+). Its pathway is nitrogen metabolism; urea degradation; CO(2) and NH(3) from urea (urease route): step 1/1. This chain is Urease subunit gamma, found in Ureaplasma urealyticum serovar 10 (strain ATCC 33699 / Western).